Consider the following 340-residue polypeptide: Pesticidal crystal protein Cry15Aa (340 aa).

The disordered stretch occupies residues 318 to 340 (RDYDKEHICHDQAEKYERDYDKE).

Functionally, promotes colloidosmotic lysis by binding to the midgut epithelial cells of lepidopteran larvae. The sequence is that of Pesticidal crystal protein Cry15Aa (cry15Aa) from Bacillus thuringiensis subsp. thompsoni.